A 385-amino-acid chain; its full sequence is Acetate kinase (385 aa).

N9 contacts Mg(2+). K16 contributes to the ATP binding site. R75 is a substrate binding site. D132 (proton donor/acceptor) is an active-site residue. ATP contacts are provided by residues 192 to 196 (HLGNG), 266 to 268 (DFR), and 314 to 318 (GIGEN). E368 provides a ligand contact to Mg(2+).

Belongs to the acetokinase family. In terms of assembly, homodimer. The cofactor is Mg(2+). It depends on Mn(2+) as a cofactor.

It localises to the cytoplasm. It catalyses the reaction acetate + ATP = acetyl phosphate + ADP. It participates in metabolic intermediate biosynthesis; acetyl-CoA biosynthesis; acetyl-CoA from acetate: step 1/2. Functionally, catalyzes the formation of acetyl phosphate from acetate and ATP. Can also catalyze the reverse reaction. This Mycobacterium bovis (strain ATCC BAA-935 / AF2122/97) protein is Acetate kinase.